The following is a 359-amino-acid chain: Phosphoserine aminotransferase (359 aa).

Position 41 (R41) interacts with L-glutamate. Pyridoxal 5'-phosphate is bound by residues 75–76 (AS), W101, T152, D171, and Q194. K195 carries the N6-(pyridoxal phosphate)lysine modification. 236–237 (NT) contacts pyridoxal 5'-phosphate.

This sequence belongs to the class-V pyridoxal-phosphate-dependent aminotransferase family. SerC subfamily. As to quaternary structure, homodimer. It depends on pyridoxal 5'-phosphate as a cofactor.

Its subcellular location is the cytoplasm. It carries out the reaction O-phospho-L-serine + 2-oxoglutarate = 3-phosphooxypyruvate + L-glutamate. The catalysed reaction is 4-(phosphooxy)-L-threonine + 2-oxoglutarate = (R)-3-hydroxy-2-oxo-4-phosphooxybutanoate + L-glutamate. Its pathway is amino-acid biosynthesis; L-serine biosynthesis; L-serine from 3-phospho-D-glycerate: step 2/3. The protein operates within cofactor biosynthesis; pyridoxine 5'-phosphate biosynthesis; pyridoxine 5'-phosphate from D-erythrose 4-phosphate: step 3/5. Its function is as follows. Catalyzes the reversible conversion of 3-phosphohydroxypyruvate to phosphoserine and of 3-hydroxy-2-oxo-4-phosphonooxybutanoate to phosphohydroxythreonine. The protein is Phosphoserine aminotransferase of Acinetobacter baumannii (strain ACICU).